The primary structure comprises 621 residues: MDSHTLIQALIYLGAAALIVPIASVLGLGSVLGYLIAGCIIGPWALRLVNDAEAILHFAEIGVVLMLVAMGLELDPQRLWKLRASVFDGGALQMVACGVLIGLFCMLLGLRWQVAELIGMTLALSSTAIAMQAMNERNLTVSQMGRSAFAVLLFQDIAAIPLVAMIPLLAASGGATSLMAFALSALKVAAALALVVVLGRYLTRPLLRFVARSGLREVFSAVACSWSSALGLLLEEVGLSMAMGAFLAGVLLASSEYRHALENDIEPVKGLLLGLFFIGVGMSIDFAPWSPNPLRIVILLVGFPAIKMLMLWLIAQPLGVPRAQHRWFAVLLGQGSEFAFVVFGPARMADVLDGEWPKALTLAVALSMATTPILLVLLTRLEKSSSGQARDADEIDEEQPRVIVAGFGRFGQIAGRLLLSSGVKMVILDHDPDHVDTLRKFDMKVFYGDATRVDLLESAGAEKAEVLINAIDDPHVSLELVARVKEHFPHLQIISRARDVDHYIQLRQAGVEAPERETFEAALKSGRMTLEALGLGAYEARERPDLFRRFNLQMVEEMVAMAENDPRRGVAVFKRTSDMLTGIINEDRHHLSLVQRHGWQGTEEGRHTGDIADEPENKPSA.

12 consecutive transmembrane segments (helical) span residues 9–29, 30–50, 54–74, 90–110, 114–134, 149–169, 178–198, 232–252, 270–290, 296–316, 326–346, and 359–379; these read ALIYLGAAALIVPIASVLGLG, SVLGYLIAGCIIGPWALRLVN, AILHFAEIGVVLMLVAMGLEL, GALQMVACGVLIGLFCMLLGL, VAELIGMTLALSSTAIAMQAM, FAVLLFQDIAAIPLVAMIPLL, LMAFALSALKVAAALALVVVL, LLLEEVGLSMAMGAFLAGVLL, GLLLGLFFIGVGMSIDFAPWS, IVILLVGFPAIKMLMLWLIAQ, RWFAVLLGQGSEFAFVVFGPA, and ALTLAVALSMATTPILLVLLT. One can recognise an RCK N-terminal domain in the interval 399 to 518; sequence QPRVIVAGFG…AGVEAPERET (120 aa). The segment at 598-621 is disordered; the sequence is GWQGTEEGRHTGDIADEPENKPSA.

It belongs to the monovalent cation:proton antiporter 2 (CPA2) transporter (TC 2.A.37) family. KefC subfamily. Homodimer. Interacts with the regulatory subunit KefF.

The protein resides in the cell inner membrane. In terms of biological role, pore-forming subunit of a potassium efflux system that confers protection against electrophiles. Catalyzes K(+)/H(+) antiport. This is Glutathione-regulated potassium-efflux system protein KefC from Klebsiella aerogenes (Enterobacter aerogenes).